The following is a 320-amino-acid chain: MDGIVQNMFTFIVIVEIIIGWIGNGFIALVNCIHWYKRRKISALNQILTALAFSRIYLLLTVFTVIAVSTLYTHVLVTRRVVKLINFHLLFSNHFSMWLAACLGLYYFLKIAHFPNSIFVYLKMRINQVVSGTLLMSLGLLFLNTLLINSYIDTKIDDYREHLLYDFTSNNTASFYRVILVINNCIFTSIPFTLSQSTFLLLIFSLWRHYKKMQQHAQRCRDVLADAHIRVLQTMVTYVLLCAIFFLSLSMQILRSELLKNILYVRFCEIVAAVFPSGHSCVLICRDTNLRGTFLSVLSWLKQRFTSWIPNINCRSSCIF.

The Extracellular segment spans residues 1–8 (MDGIVQNM). A helical transmembrane segment spans residues 9–29 (FTFIVIVEIIIGWIGNGFIAL). The Cytoplasmic segment spans residues 30-55 (VNCIHWYKRRKISALNQILTALAFSR). The chain crosses the membrane as a helical span at residues 56-76 (IYLLLTVFTVIAVSTLYTHVL). Topologically, residues 77-88 (VTRRVVKLINFH) are extracellular. The helical transmembrane segment at 89-109 (LLFSNHFSMWLAACLGLYYFL) threads the bilayer. Over 110–128 (KIAHFPNSIFVYLKMRINQ) the chain is Cytoplasmic. A helical membrane pass occupies residues 129-149 (VVSGTLLMSLGLLFLNTLLIN). The Extracellular portion of the chain corresponds to 150-185 (SYIDTKIDDYREHLLYDFTSNNTASFYRVILVINNC). An N-linked (GlcNAc...) asparagine glycan is attached at N170. Residues 186–206 (IFTSIPFTLSQSTFLLLIFSL) form a helical membrane-spanning segment. The Cytoplasmic portion of the chain corresponds to 207–233 (WRHYKKMQQHAQRCRDVLADAHIRVLQ). The chain crosses the membrane as a helical span at residues 234 to 254 (TMVTYVLLCAIFFLSLSMQIL). Over 255–264 (RSELLKNILY) the chain is Extracellular. A helical transmembrane segment spans residues 265 to 285 (VRFCEIVAAVFPSGHSCVLIC). Residues 286-320 (RDTNLRGTFLSVLSWLKQRFTSWIPNINCRSSCIF) are Cytoplasmic-facing.

Belongs to the G-protein coupled receptor T2R family.

Its subcellular location is the membrane. Functionally, putative taste receptor which may play a role in the perception of bitterness. This Mus musculus (Mouse) protein is Taste receptor type 2 member 129.